The primary structure comprises 347 residues: S-adenosylmethionine:tRNA ribosyltransferase-isomerase (347 aa).

Belongs to the QueA family. In terms of assembly, monomer.

The protein resides in the cytoplasm. The enzyme catalyses 7-aminomethyl-7-carbaguanosine(34) in tRNA + S-adenosyl-L-methionine = epoxyqueuosine(34) in tRNA + adenine + L-methionine + 2 H(+). Its pathway is tRNA modification; tRNA-queuosine biosynthesis. Its function is as follows. Transfers and isomerizes the ribose moiety from AdoMet to the 7-aminomethyl group of 7-deazaguanine (preQ1-tRNA) to give epoxyqueuosine (oQ-tRNA). In Streptococcus thermophilus (strain CNRZ 1066), this protein is S-adenosylmethionine:tRNA ribosyltransferase-isomerase.